We begin with the raw amino-acid sequence, 273 residues long: Dermonecrotic toxin SdSicTox-betaIIB1bxiv (273 aa).

Histidine 4 is a catalytic residue. Glutamate 24 and aspartate 26 together coordinate Mg(2+). Histidine 40 functions as the Nucleophile in the catalytic mechanism. Disulfide bonds link cysteine 44–cysteine 50 and cysteine 46–cysteine 189. Mg(2+) is bound at residue aspartate 84.

The protein belongs to the arthropod phospholipase D family. Class II subfamily. It depends on Mg(2+) as a cofactor. As to expression, expressed by the venom gland.

It is found in the secreted. The enzyme catalyses an N-(acyl)-sphingosylphosphocholine = an N-(acyl)-sphingosyl-1,3-cyclic phosphate + choline. It catalyses the reaction an N-(acyl)-sphingosylphosphoethanolamine = an N-(acyl)-sphingosyl-1,3-cyclic phosphate + ethanolamine. It carries out the reaction a 1-acyl-sn-glycero-3-phosphocholine = a 1-acyl-sn-glycero-2,3-cyclic phosphate + choline. The catalysed reaction is a 1-acyl-sn-glycero-3-phosphoethanolamine = a 1-acyl-sn-glycero-2,3-cyclic phosphate + ethanolamine. Its function is as follows. Dermonecrotic toxins cleave the phosphodiester linkage between the phosphate and headgroup of certain phospholipids (sphingolipid and lysolipid substrates), forming an alcohol (often choline) and a cyclic phosphate. This toxin acts on sphingomyelin (SM). It may also act on ceramide phosphoethanolamine (CPE), lysophosphatidylcholine (LPC) and lysophosphatidylethanolamine (LPE), but not on lysophosphatidylserine (LPS), and lysophosphatidylglycerol (LPG). It acts by transphosphatidylation, releasing exclusively cyclic phosphate products as second products. Induces dermonecrosis, hemolysis, increased vascular permeability, edema, inflammatory response, and platelet aggregation. The sequence is that of Dermonecrotic toxin SdSicTox-betaIIB1bxiv from Sicarius cf. damarensis (strain GJB-2008) (Six-eyed sand spider).